Here is a 202-residue protein sequence, read N- to C-terminus: Nucleoid occlusion factor SlmA (202 aa).

Residues 14 to 75 (KERQQQVLEV…ALIERIEQTL (62 aa)) enclose the HTH tetR-type domain. The segment at residues 38-57 (TTERLAKAVGVSEGALYRYF) is a DNA-binding region (H-T-H motif).

This sequence belongs to the nucleoid occlusion factor SlmA family. In terms of assembly, homodimer. Interacts with FtsZ.

It is found in the cytoplasm. It localises to the nucleoid. Its function is as follows. Required for nucleoid occlusion (NO) phenomenon, which prevents Z-ring formation and cell division over the nucleoid. Acts as a DNA-associated cell division inhibitor that binds simultaneously chromosomal DNA and FtsZ, and disrupts the assembly of FtsZ polymers. SlmA-DNA-binding sequences (SBS) are dispersed on non-Ter regions of the chromosome, preventing FtsZ polymerization at these regions. This Actinobacillus pleuropneumoniae serotype 5b (strain L20) protein is Nucleoid occlusion factor SlmA.